Reading from the N-terminus, the 438-residue chain is GTPase Obg (438 aa).

In terms of domain architecture, Obg spans methionine 1–isoleucine 159. Residues alanine 160 to proline 332 form the OBG-type G domain. Residues glycine 166–serine 173, phenylalanine 191–serine 195, aspartate 219–glycine 222, asparagine 285–glutamate 288, and serine 313–lysine 315 contribute to the ATP site. 2 residues coordinate Mg(2+): serine 173 and threonine 193. The region spanning isoleucine 357–aspartate 435 is the OCT domain.

The protein belongs to the TRAFAC class OBG-HflX-like GTPase superfamily. OBG GTPase family. As to quaternary structure, monomer. It depends on Mg(2+) as a cofactor.

The protein localises to the cytoplasm. Its function is as follows. An essential GTPase which binds GTP, GDP and possibly (p)ppGpp with moderate affinity, with high nucleotide exchange rates and a fairly low GTP hydrolysis rate. Plays a role in control of the cell cycle, stress response, ribosome biogenesis and in those bacteria that undergo differentiation, in morphogenesis control. The protein is GTPase Obg of Deinococcus radiodurans (strain ATCC 13939 / DSM 20539 / JCM 16871 / CCUG 27074 / LMG 4051 / NBRC 15346 / NCIMB 9279 / VKM B-1422 / R1).